A 274-amino-acid chain; its full sequence is Large ribosomal subunit protein uL2 (274 aa).

2 disordered regions span residues Ala-28–Gly-55 and Val-224–Lys-274. The segment covering Lys-263 to Lys-274 has biased composition (basic and acidic residues).

The protein belongs to the universal ribosomal protein uL2 family. Part of the 50S ribosomal subunit. Forms a bridge to the 30S subunit in the 70S ribosome.

In terms of biological role, one of the primary rRNA binding proteins. Required for association of the 30S and 50S subunits to form the 70S ribosome, for tRNA binding and peptide bond formation. It has been suggested to have peptidyltransferase activity; this is somewhat controversial. Makes several contacts with the 16S rRNA in the 70S ribosome. The protein is Large ribosomal subunit protein uL2 of Pseudomonas fluorescens (strain ATCC BAA-477 / NRRL B-23932 / Pf-5).